The following is a 237-amino-acid chain: MKPSYPQHIAVIMDGNGRWAKKQGKKRTQGHKEGAKIVRDITQWCAEKGIPYLTLYAFSTENWKRPKIEVDFLMKLLEKYLHDEKPVYMKNHIRFRVIGDISVFNTRLKNAILELEHATQNHTKLTQILALNYGSRDEIARTFIKLAHTLTPHTLASLSSQDIISMINANLDTATLPDVDMLIRTGGEKRISNFMLWQASYAELFFTPTLFPSFGKNELNAMLEEFLQRQRRFGGVE.

Residue aspartate 14 is part of the active site. Aspartate 14 lines the Mg(2+) pocket. Residues 15 to 18 (GNGR), tryptophan 19, arginine 27, histidine 31, and 59 to 61 (STE) each bind substrate. Asparagine 62 acts as the Proton acceptor in catalysis. Residues tryptophan 63, arginine 65, arginine 184, and 190-192 (RIS) contribute to the substrate site. Glutamate 203 is a binding site for Mg(2+).

Belongs to the UPP synthase family. Homodimer. The cofactor is Mg(2+).

Its function is as follows. Catalyzes the condensation of isopentenyl diphosphate (IPP) with allylic pyrophosphates generating different type of terpenoids. The protein is Isoprenyl transferase of Helicobacter hepaticus (strain ATCC 51449 / 3B1).